Here is a 247-residue protein sequence, read N- to C-terminus: Sec-independent protein translocase protein TatC (247 aa).

Transmembrane regions (helical) follow at residues 21–41 (IILL…KPLI), 71–91 (AFII…WAFV), 109–129 (ITFL…FPFI), 154–174 (FLLQ…VIML), and 195–215 (FCLL…HLMI).

Belongs to the TatC family. In terms of assembly, forms a complex with TatA.

The protein resides in the cell membrane. Its function is as follows. Part of the twin-arginine translocation (Tat) system that transports large folded proteins containing a characteristic twin-arginine motif in their signal peptide across membranes. The protein is Sec-independent protein translocase protein TatC of Listeria innocua serovar 6a (strain ATCC BAA-680 / CLIP 11262).